A 207-amino-acid polypeptide reads, in one-letter code: Gene 66 protein (207 aa).

The sequence is that of Gene 66 protein (66) from Mycobacterium (Mycobacteriophage L5).